A 310-amino-acid chain; its full sequence is Homeobox protein dsc-1 (310 aa).

A DNA-binding region (homeobox) is located at residues 180–239 (RRRFRTNFTELQSTFLEDSFKESHYPDHKAKKYMADFLKIPEDRITVWFQNRRAKWRRKE). Residues 262-310 (CFSAQHPDDGPNAKHPNSFGIPNQPMSLDQFPMNTEQDFPEFPSLQEHQ) are disordered. The span at 281 to 298 (GIPNQPMSLDQFPMNTEQ) shows a compositional bias: polar residues.

Expressed in the bilateral sensory neurons AWA, AWB, AWC, ASE, FLP and PVD. Also expressed in the enteric intestinal and anal depressor muscles.

Its subcellular location is the nucleus. It is found in the cell projection. It localises to the axon. The protein localises to the cytoplasm. In terms of biological role, transcriptional regulator which plays a role in the expulsion step of defecation by controlling enteric muscle-specific expression of exp-1 which is required for enteric muscle contraction. Not required for exp-1 expression in the PDA neuron. Also involved in controlling the length of the defecation cycle. The chain is Homeobox protein dsc-1 from Caenorhabditis elegans.